The chain runs to 212 residues: Ribonuclease HII (212 aa).

The region spanning 20-209 is the RNase H type-2 domain; that stretch reads TCVVGVDEVG…VHNILYQEAS (190 aa). 3 residues coordinate a divalent metal cation: aspartate 26, glutamate 27, and aspartate 117.

The protein belongs to the RNase HII family. It depends on Mn(2+) as a cofactor. Mg(2+) serves as cofactor.

It is found in the cytoplasm. It catalyses the reaction Endonucleolytic cleavage to 5'-phosphomonoester.. In terms of biological role, endonuclease that specifically degrades the RNA of RNA-DNA hybrids. This Cereibacter sphaeroides (strain ATCC 17029 / ATH 2.4.9) (Rhodobacter sphaeroides) protein is Ribonuclease HII.